The primary structure comprises 478 residues: Septin-4 (478 aa).

Positions 1–115 (MDHSLGWQGN…RSPWGKLDPY (115 aa)) are disordered. Phosphoserine occurs at positions 28, 29, and 68. Positions 84–93 (PQPSDSQQYF) are enriched in polar residues. Over residues 94–108 (SAPAPLSPSSRPRSP) the composition is skewed to low complexity. Phosphoserine is present on residues S117 and S118. The Septin-type G domain maps to 141-414 (KGFDFTLMVA…ENYRAQCIQS (274 aa)). Positions 151-158 (GESGLGKS) are G1 motif. Residues 151–158 (GESGLGKS) and T185 each bind GTP. The segment at 208-211 (DTPG) is G3 motif. Residues 289 to 292 (AKAD) are G4 motif. 290–298 (KADTLTPPE) provides a ligand contact to GTP. S325 carries the phosphoserine modification. GTP contacts are provided by G348 and R363. A disordered region spans residues 428–449 (LTRESGTDFPIPAVPPGTDPET). S432 carries the post-translational modification Phosphoserine. T434 is subject to Phosphothreonine. Positions 447-478 (PETEKLIREKDEELRRMQEMLHKIQRQMKETH) form a coiled coil.

The protein belongs to the TRAFAC class TrmE-Era-EngA-EngB-Septin-like GTPase superfamily. Septin GTPase family. Septins polymerize into heterooligomeric protein complexes that form filaments, and can associate with cellular membranes, actin filaments and microtubules. GTPase activity is required for filament formation. Interacts with SEPTIN8. Component of a septin core octameric complex consisting of SEPTIN12, SEPTIN7, SEPTIN6 and SEPTIN2 or SEPTIN4 in the order 12-7-6-2-2-6-7-12 or 12-7-6-4-4-6-7-12. Interacts with SEPTIN14 (via C-terminus). Interacts with DYRK1A. Interacts with SLC6A3/DAT and SNCA/alpha-synuclein. Interacts with STX1A; in the striatum. Interacts with XIAP (via BIR3 domain) following the induction of apoptosis. Interacts with AREL1 (via HECT domain); in the cytoplasm following induction of apoptosis. As to quaternary structure, interacts with DPYSL5. Post-translationally, phosphorylated by DYRK1A. Ubiquitinated by AREL1. In terms of processing, may be phosphorylated. In terms of tissue distribution, expressed in the cerebral cortex, striatum, midbrain, cerebellum and spinal cord (at protein level). Expressed in the substantia nigra pars compacta, ventral tegmental area, projection fiber bundles and in axon terminals surrounding striatal neurons (at protein level). Expressed in hair follicle stem cells (at protein level). Expressed in small intestinal crypts; abundantly expressed at the crypt base (at protein level). Widely expressed in the brain and to a lesser extent in the testis, lung and liver. As to expression, highly expressed in the brain and testis and, to a lesser extent in the heart, lung and kidney. In the brain, abundant in areas of high cell density, particularly in the stria terminalis. Expressed in the entorhinal, temporal and visual cortices and the hippocampus of the brain where is colocalizes with DYRK1A in postnatal day 1 and adult mice. Expressed and extensively colocalizes with DYRK1A in apical dendrites of pyramidal cells. Predominantly expressed in embryonic brain and dorsal root ganglion neurons. In terms of tissue distribution, expressed in LGR5-positive intestinal stem cells and lysozyme-positive Paneth cells (at protein level). Expressed in the brain and testis.

The protein resides in the cytoplasm. It is found in the cell projection. Its subcellular location is the cilium. The protein localises to the flagellum. It localises to the cytoplasmic vesicle. The protein resides in the secretory vesicle. It is found in the axon. Its subcellular location is the dendrite. The protein localises to the perikaryon. It localises to the synapse. The protein resides in the mitochondrion. It is found in the cytosol. Its function is as follows. Filament-forming cytoskeletal GTPase. Pro-apoptotic protein involved in LGR5-positive intestinal stem cell and Paneth cell expansion in the intestines, via its interaction with XIAP. May also play a role in the regulation of cell fate in the intestine. Positive regulator of apoptosis involved in hematopoietic stem cell homeostasis; via its interaction with XIAP. Negative regulator of repair and hair follicle regeneration in response to injury, due to inhibition of hair follicle stem cell proliferation, potentially via its interaction with XIAP. Plays an important role in male fertility and sperm motility. During spermiogenesis, essential for the establishment of the annulus (a fibrous ring structure connecting the midpiece and the principal piece of the sperm flagellum) which is a requisite for the structural and mechanical integrity of the sperm. Involved in the migration of cortical neurons and the formation of neuron leading processes during embryonic development. Required for dopaminergic metabolism in presynaptic autoreceptors; potentially via activity as a presynaptic scaffold protein. The chain is Septin-4 from Mus musculus (Mouse).